The following is a 659-amino-acid chain: DNA ligase (659 aa).

Residues 32 to 36 (DQQYD), 81 to 82 (SL), and E110 contribute to the NAD(+) site. The N6-AMP-lysine intermediate role is filled by K112. Residues R133, E167, K282, and K306 each contribute to the NAD(+) site. Zn(2+) is bound by residues C399, C402, C415, and C420. The 78-residue stretch at 582–659 (IKNNIFKNKK…QEHEFEELIK (78 aa)) folds into the BRCT domain.

This sequence belongs to the NAD-dependent DNA ligase family. LigA subfamily. The cofactor is Mg(2+). Mn(2+) serves as cofactor.

It catalyses the reaction NAD(+) + (deoxyribonucleotide)n-3'-hydroxyl + 5'-phospho-(deoxyribonucleotide)m = (deoxyribonucleotide)n+m + AMP + beta-nicotinamide D-nucleotide.. Functionally, DNA ligase that catalyzes the formation of phosphodiester linkages between 5'-phosphoryl and 3'-hydroxyl groups in double-stranded DNA using NAD as a coenzyme and as the energy source for the reaction. It is essential for DNA replication and repair of damaged DNA. The chain is DNA ligase from Phytoplasma mali (strain AT).